We begin with the raw amino-acid sequence, 333 residues long: tRNA N6-adenosine threonylcarbamoyltransferase (333 aa).

Residues His-111 and His-115 each contribute to the Fe cation site. Substrate is bound by residues 134-138 (LVSGG), Asp-167, Gly-180, and Asn-272. Asp-300 contributes to the Fe cation binding site.

It belongs to the KAE1 / TsaD family. Requires Fe(2+) as cofactor.

The protein resides in the cytoplasm. It carries out the reaction L-threonylcarbamoyladenylate + adenosine(37) in tRNA = N(6)-L-threonylcarbamoyladenosine(37) in tRNA + AMP + H(+). Required for the formation of a threonylcarbamoyl group on adenosine at position 37 (t(6)A37) in tRNAs that read codons beginning with adenine. Is involved in the transfer of the threonylcarbamoyl moiety of threonylcarbamoyl-AMP (TC-AMP) to the N6 group of A37, together with TsaE and TsaB. TsaD likely plays a direct catalytic role in this reaction. This Legionella pneumophila (strain Lens) protein is tRNA N6-adenosine threonylcarbamoyltransferase.